A 141-amino-acid chain; its full sequence is Putative pre-16S rRNA nuclease (141 aa).

Belongs to the YqgF nuclease family.

The protein resides in the cytoplasm. Functionally, could be a nuclease involved in processing of the 5'-end of pre-16S rRNA. This is Putative pre-16S rRNA nuclease from Coxiella burnetii (strain CbuK_Q154) (Coxiella burnetii (strain Q154)).